The primary structure comprises 120 residues: Large ribosomal subunit protein uL18 (120 aa).

This sequence belongs to the universal ribosomal protein uL18 family. Part of the 50S ribosomal subunit; part of the 5S rRNA/L5/L18/L25 subcomplex. Contacts the 5S and 23S rRNAs.

Functionally, this is one of the proteins that bind and probably mediate the attachment of the 5S RNA into the large ribosomal subunit, where it forms part of the central protuberance. In Xanthobacter autotrophicus (strain ATCC BAA-1158 / Py2), this protein is Large ribosomal subunit protein uL18.